The following is a 403-amino-acid chain: Flavohemoprotein (403 aa).

Positions M1–S138 constitute a Globin domain. H85 provides a ligand contact to heme b. Catalysis depends on charge relay system residues Y95 and E137. The tract at residues G149 to E403 is reductase. The 111-residue stretch at A152–D262 folds into the FAD-binding FR-type domain. FAD-binding positions include Y190 and R206–S209. G275–P280 provides a ligand contact to NADP(+). V395–P398 provides a ligand contact to FAD.

This sequence belongs to the globin family. Two-domain flavohemoproteins subfamily. The protein in the C-terminal section; belongs to the flavoprotein pyridine nucleotide cytochrome reductase family. It depends on heme b as a cofactor. FAD serves as cofactor.

It catalyses the reaction 2 nitric oxide + NADPH + 2 O2 = 2 nitrate + NADP(+) + H(+). It carries out the reaction 2 nitric oxide + NADH + 2 O2 = 2 nitrate + NAD(+) + H(+). In terms of biological role, is involved in NO detoxification in an aerobic process, termed nitric oxide dioxygenase (NOD) reaction that utilizes O(2) and NAD(P)H to convert NO to nitrate, which protects the bacterium from various noxious nitrogen compounds. Therefore, plays a central role in the inducible response to nitrosative stress. This Rhizobium meliloti (strain 1021) (Ensifer meliloti) protein is Flavohemoprotein.